The primary structure comprises 353 residues: Photosystem II protein D1 (353 aa).

At T2 the chain carries N-acetylthreonine. At T2 the chain carries Phosphothreonine. Transmembrane regions (helical) follow at residues 29–46, 118–133, and 142–156; these read YIGW…TATS, HFLL…EWEL, and WIAV…AATA. A chlorophyll a-binding site is contributed by H118. Residue Y126 participates in pheophytin a binding. The [CaMn4O5] cluster site is built by D170 and E189. Residues 197 to 218 form a helical membrane-spanning segment; it reads FHMLGVAGVFGGSLFSAMHGSL. Residue H198 coordinates chlorophyll a. A quinone-binding positions include H215 and 264–265; that span reads SF. Position 215 (H215) interacts with Fe cation. Position 272 (H272) interacts with Fe cation. Residues 274–288 traverse the membrane as a helical segment; that stretch reads FLAAWPVVGIWFTAL. Positions 332, 333, 342, and 344 each coordinate [CaMn4O5] cluster. The propeptide occupies 345–353; the sequence is AIEAPSTNG.

Belongs to the reaction center PufL/M/PsbA/D family. In terms of assembly, PSII is composed of 1 copy each of membrane proteins PsbA, PsbB, PsbC, PsbD, PsbE, PsbF, PsbH, PsbI, PsbJ, PsbK, PsbL, PsbM, PsbT, PsbX, PsbY, PsbZ, Psb30/Ycf12, at least 3 peripheral proteins of the oxygen-evolving complex and a large number of cofactors. It forms dimeric complexes. The D1/D2 heterodimer binds P680, chlorophylls that are the primary electron donor of PSII, and subsequent electron acceptors. It shares a non-heme iron and each subunit binds pheophytin, quinone, additional chlorophylls, carotenoids and lipids. D1 provides most of the ligands for the Mn4-Ca-O5 cluster of the oxygen-evolving complex (OEC). There is also a Cl(-1) ion associated with D1 and D2, which is required for oxygen evolution. The PSII complex binds additional chlorophylls, carotenoids and specific lipids. is required as a cofactor. In terms of processing, tyr-161 forms a radical intermediate that is referred to as redox-active TyrZ, YZ or Y-Z. Post-translationally, C-terminally processed by CTPA; processing is essential to allow assembly of the oxygen-evolving complex and thus photosynthetic growth.

The protein localises to the plastid. It is found in the chloroplast thylakoid membrane. The catalysed reaction is 2 a plastoquinone + 4 hnu + 2 H2O = 2 a plastoquinol + O2. Photosystem II (PSII) is a light-driven water:plastoquinone oxidoreductase that uses light energy to abstract electrons from H(2)O, generating O(2) and a proton gradient subsequently used for ATP formation. It consists of a core antenna complex that captures photons, and an electron transfer chain that converts photonic excitation into a charge separation. The D1/D2 (PsbA/PsbD) reaction center heterodimer binds P680, the primary electron donor of PSII as well as several subsequent electron acceptors. The chain is Photosystem II protein D1 from Citrus sinensis (Sweet orange).